A 479-amino-acid polypeptide reads, in one-letter code: F-box protein SKIP17 (479 aa).

The F-box domain occupies Asn92–Ile138. The disordered stretch occupies residues Glu435–Leu479. Acidic residues predominate over residues Met437 to Met469.

Part of a SCF (ASK-cullin-F-box) protein ligase complex. Interacts with SPK1B/ASK2.

The protein localises to the nucleus. It functions in the pathway protein modification; protein ubiquitination. Functionally, component of SCF(ASK-cullin-F-box) E3 ubiquitin ligase complexes, which may mediate the ubiquitination and subsequent proteasomal degradation of target proteins. The polypeptide is F-box protein SKIP17 (SKIP17) (Arabidopsis thaliana (Mouse-ear cress)).